Reading from the N-terminus, the 228-residue chain is Prolactin-2A1 (228 aa).

A signal peptide spans 1–28; the sequence is MQLSVTHPCCRTLILLLVSNLLLWESEA. 2 disulfide bridges follow: Cys87–Cys203 and Cys220–Cys228.

Belongs to the somatotropin/prolactin family. As to expression, expressed specifically in the placenta. Expression restricted to the junctional zone of the chorioallantoic placenta.

The protein resides in the secreted. This chain is Prolactin-2A1 (Prl2a1), found in Mus musculus (Mouse).